Here is an 83-residue protein sequence, read N- to C-terminus: uncharacterized protein (83 aa).

This is an uncharacterized protein from Rickettsia conorii (strain ATCC VR-613 / Malish 7).